A 320-amino-acid chain; its full sequence is uncharacterized protein (320 aa).

A signal peptide spans 1-23 (MKLNLRFPSYFLPVVAASAFLVS). Cysteine 24 carries the N-palmitoyl cysteine lipid modification. Cysteine 24 carries S-diacylglycerol cysteine lipidation. The interval 160–181 (KNHEHGHTHKNGETHEHDHDHH) is disordered.

The protein resides in the cell membrane. This is an uncharacterized protein from Mycoplasma pneumoniae (strain ATCC 29342 / M129 / Subtype 1) (Mycoplasmoides pneumoniae).